The chain runs to 252 residues: MLTKRIIPCLDVKGGRVVKGVNFKDLRDEGDPVELARYYDREGADELVFLDITASAENRGIVIDMVEKTAASVFIPFTIGGGIRTISDMKAILNAGADKVSINSAAVKNPGLIAEGARVFGSQCIVVAIDCCRKNGNWEVYINGGRTVTGLDAIKWAQKVEELGAGEILLTSMDADGTKDGYDTELLAAVSTAVEIPVIASGGAGMPEHLREAIVEGQADAVLAASIFHEKTYSVSEVKEYLAGHGIPVRIE.

Residues aspartate 11 and aspartate 130 contribute to the active site.

This sequence belongs to the HisA/HisF family. As to quaternary structure, heterodimer of HisH and HisF.

It localises to the cytoplasm. It catalyses the reaction 5-[(5-phospho-1-deoxy-D-ribulos-1-ylimino)methylamino]-1-(5-phospho-beta-D-ribosyl)imidazole-4-carboxamide + L-glutamine = D-erythro-1-(imidazol-4-yl)glycerol 3-phosphate + 5-amino-1-(5-phospho-beta-D-ribosyl)imidazole-4-carboxamide + L-glutamate + H(+). It participates in amino-acid biosynthesis; L-histidine biosynthesis; L-histidine from 5-phospho-alpha-D-ribose 1-diphosphate: step 5/9. Its function is as follows. IGPS catalyzes the conversion of PRFAR and glutamine to IGP, AICAR and glutamate. The HisF subunit catalyzes the cyclization activity that produces IGP and AICAR from PRFAR using the ammonia provided by the HisH subunit. The sequence is that of Imidazole glycerol phosphate synthase subunit HisF from Halothermothrix orenii (strain H 168 / OCM 544 / DSM 9562).